The sequence spans 115 residues: Somatostatin-1 (115 aa).

The N-terminal stretch at 1–24 is a signal peptide; the sequence is MLSCRFQCALVLLSLAVVFSKVSA. A propeptide spanning residues 25–88 is cleaved from the precursor; that stretch reads APSDLRLRQL…QDEVRLELDR (64 aa). The tract at residues 65–95 is disordered; it reads NDALDSSDLSRGADQDEVRLELDRSANSSPL. Residues 75-88 show a composition bias toward basic and acidic residues; sequence RGADQDEVRLELDR. C104 and C115 are disulfide-bonded.

The protein belongs to the somatostatin family.

The protein resides in the secreted. Somatostatin inhibits the release of somatotropin. The chain is Somatostatin-1 (sst1) from Protopterus annectens (African lungfish).